The sequence spans 129 residues: DNA-directed RNA polymerase III subunit rpc9 (129 aa).

Belongs to the eukaryotic RPC9 RNA polymerase subunit family. In terms of assembly, component of the RNA polymerase III (Pol III) complex.

It localises to the cytoplasm. The protein localises to the nucleus. In terms of biological role, DNA-dependent RNA polymerase catalyzes the transcription of DNA into RNA using the four ribonucleoside triphosphates as substrates. Specific peripheric component of RNA polymerase III which synthesizes small RNAs, such as 5S rRNA and tRNAs. This is DNA-directed RNA polymerase III subunit rpc9 (rpc17) from Schizosaccharomyces pombe (strain 972 / ATCC 24843) (Fission yeast).